Here is a 473-residue protein sequence, read N- to C-terminus: Photosystem II CP43 reaction center protein (473 aa).

Positions 1-14 are excised as a propeptide; that stretch reads MKTLYSLRRFYPVE. The residue at position 15 (threonine 15) is an N-acetylthreonine. A Phosphothreonine modification is found at threonine 15. The next 5 helical transmembrane spans lie at 69–93, 134–155, 178–200, 255–275, and 291–312; these read LFEV…PHLA, LLGP…KDRN, KALY…RKIT, KPFA…LSYS, and WFNN…ASQA. Residue glutamate 367 participates in [CaMn4O5] cluster binding. The chain crosses the membrane as a helical span at residues 447-471; the sequence is RARAAAAGFEKGIDRDFEPVLSMTP.

Belongs to the PsbB/PsbC family. PsbC subfamily. PSII is composed of 1 copy each of membrane proteins PsbA, PsbB, PsbC, PsbD, PsbE, PsbF, PsbH, PsbI, PsbJ, PsbK, PsbL, PsbM, PsbT, PsbX, PsbY, PsbZ, Psb30/Ycf12, at least 3 peripheral proteins of the oxygen-evolving complex and a large number of cofactors. It forms dimeric complexes. The cofactor is Binds multiple chlorophylls and provides some of the ligands for the Ca-4Mn-5O cluster of the oxygen-evolving complex. It may also provide a ligand for a Cl- that is required for oxygen evolution. PSII binds additional chlorophylls, carotenoids and specific lipids..

The protein resides in the plastid. Its subcellular location is the chloroplast thylakoid membrane. Functionally, one of the components of the core complex of photosystem II (PSII). It binds chlorophyll and helps catalyze the primary light-induced photochemical processes of PSII. PSII is a light-driven water:plastoquinone oxidoreductase, using light energy to abstract electrons from H(2)O, generating O(2) and a proton gradient subsequently used for ATP formation. The polypeptide is Photosystem II CP43 reaction center protein (Drimys granadensis).